Consider the following 142-residue polypeptide: Large ribosomal subunit protein uL16 (142 aa).

Belongs to the universal ribosomal protein uL16 family. In terms of assembly, part of the 50S ribosomal subunit.

Functionally, binds 23S rRNA and is also seen to make contacts with the A and possibly P site tRNAs. The chain is Large ribosomal subunit protein uL16 from Thermosipho africanus (strain TCF52B).